We begin with the raw amino-acid sequence, 210 residues long: ATP-dependent Clp protease proteolytic subunit (210 aa).

The active-site Nucleophile is S114. Residue H139 is part of the active site.

Belongs to the peptidase S14 family. As to quaternary structure, fourteen ClpP subunits assemble into 2 heptameric rings which stack back to back to give a disk-like structure with a central cavity, resembling the structure of eukaryotic proteasomes.

It localises to the cytoplasm. It catalyses the reaction Hydrolysis of proteins to small peptides in the presence of ATP and magnesium. alpha-casein is the usual test substrate. In the absence of ATP, only oligopeptides shorter than five residues are hydrolyzed (such as succinyl-Leu-Tyr-|-NHMec, and Leu-Tyr-Leu-|-Tyr-Trp, in which cleavage of the -Tyr-|-Leu- and -Tyr-|-Trp bonds also occurs).. Its function is as follows. Cleaves peptides in various proteins in a process that requires ATP hydrolysis. Has a chymotrypsin-like activity. Plays a major role in the degradation of misfolded proteins. The protein is ATP-dependent Clp protease proteolytic subunit of Janthinobacterium sp. (strain Marseille) (Minibacterium massiliensis).